Here is a 239-residue protein sequence, read N- to C-terminus: MMRKMLLAAALSVTAMTAHADYQCSVTPRDDVIVSPQTVQVKGENGNLVITPDGNVMYNGKQYSLNAAQREQAKDYQAELRSTLPWIDEGAKSRVEKARIALDKIIVQEMGESSKMRSRLTKLDAQLKEQMNRIIETRSDGLTFHYKAIDQVRAEGQQLVNQAMGGILQDSINEMGAKAVLKSGGNPLQNVLGSLGGLQSSIQTEWKKQEKDFQQFGKDVCSRVVTLEDSRKALVGNLK.

This is an uncharacterized protein from Escherichia coli O157:H7.